The primary structure comprises 809 residues: Lethal factor (809 aa).

The signal sequence occupies residues methionine 1–glycine 33. Residues aspartate 39–glutamate 66 are disordered. Positions valine 40–glutamate 66 are enriched in basic and acidic residues. Residues glutamate 60–glutamine 295 form an i; PA-binding region region. An ATLF-like 1 domain is found at lysine 70–glutamate 282. Residues arginine 296–glutamine 330 form an IIA region. A run of 5 repeats spans residues serine 315–isoleucine 333, histidine 342–isoleucine 357, serine 360–isoleucine 378, aspartate 380–serine 397, and asparagine 399–isoleucine 416. The tract at residues serine 315–isoleucine 416 is 5 X approximate repeats. An III region spans residues lysine 336–isoleucine 416. The interval aspartate 420–valine 583 is IIB. Residues lysine 585–serine 809 form an IV region. One can recognise an ATLF-like 2 domain in the interval leucine 609–lysine 804. Histidine 719 contributes to the Zn(2+) binding site. The Proton acceptor role is filled by glutamate 720. Histidine 723, tyrosine 761, and glutamate 768 together coordinate Zn(2+).

Belongs to the peptidase M34 family. In terms of assembly, interacts (via ATLF domain 1) with the cleaved form of protective antigen (PA-63) anthrax toxin; interaction is required for LF translocation into the host cytoplasm. Interacts with PA-63 homooligomers (either homoheptamers or homooctamers): three molecules of LF bind the PA-63 homoheptamer to form the PA(7)LF(3) complex, in which the relative position of the N-terminal alpha-helices in the three LFs determines which factor is translocated first. The cofactor is Zn(2+).

The protein resides in the secreted. The protein localises to the host cytoplasm. It is found in the host cytosol. It catalyses the reaction Preferred amino acids around the cleavage site can be denoted BBBBxHx-|-H, in which B denotes Arg or Lys, H denotes a hydrophobic amino acid, and x is any amino acid. The only known protein substrates are mitogen-activated protein (MAP) kinase kinases.. With respect to regulation, inhibited by NSC-12155 (1,3-Bis(2-methyl-4-aminoquinoline-6-yl)ure). Inhibited by phenoxyacetic acid bearing alpha-benzyl substituents on the C2-side chain. Inhibited by sulfonamide hydroxamate with benzylic additions at the sulfonamide nitrogen. Also inhibited by sulfonamide hydroxamates with alkylation at the sulfonamide nitrogen. Inhibited by hydroxamic acid inhibitors. In terms of biological role, lethal factor (LF), which constitutes one of the three proteins composing the anthrax toxin, is able to trigger rapid cell death in macrophages. Acts as a protease that cleaves the N-terminal of most dual specificity mitogen-activated protein kinase kinases (MAPKKs or MAP2Ks) (except for MAP2K5): cleavage invariably occurs within the N-terminal proline-rich region preceding the kinase domain, thus disrupting a sequence involved in directing specific protein-protein interactions necessary for the assembly of signaling complexes. Also cleaves mouse Nlrp1b: host Nlrp1b cleavage promotes ubiquitination and degradation of the N-terminal part of Nlrp1b by the proteasome, thereby releasing the cleaved C-terminal part of Nlrp1b, which polymerizes and forms the Nlrp1b inflammasome followed by host cell pyroptosis. Able to cleave mouse Nlrp1b alleles 1 and 5, while it is not able to cleave Nlrp1b alleles 2, 3 and 4. In contrast, does not cleave NLRP1 human ortholog. LF is not toxic by itself and only acts as a lethal factor when associated with protective antigen (PA) to form the lethal toxin (LeTx): PA is required for LF translocation into the host cytosol. The polypeptide is Lethal factor (Bacillus anthracis).